The sequence spans 356 residues: Cysteine proteinase 3 (356 aa).

A signal peptide spans 1–16 (MSRLSLVLILVAGLFA). A propeptide spans 17–138 (TALAGPATFA…KGNLKLTNVV (122 aa)) (activation peptide). An N-linked (GlcNAc...) asparagine glycan is attached at asparagine 123. Cystine bridges form between cysteine 160–cysteine 203 and cysteine 194–cysteine 236. Residue cysteine 163 is part of the active site. An N-linked (GlcNAc...) asparagine glycan is attached at asparagine 252. Residues cysteine 294 and cysteine 344 are joined by a disulfide bond. Catalysis depends on residues histidine 303 and asparagine 323.

Belongs to the peptidase C1 family. Predominantly expressed in stem and root.

It localises to the vacuole. In Solanum lycopersicum (Tomato), this protein is Cysteine proteinase 3 (CYP-3).